We begin with the raw amino-acid sequence, 271 residues long: Putative phosphoenolpyruvate synthase regulatory protein (271 aa).

Residue 152–159 participates in ADP binding; that stretch reads GVSRCGKT.

Belongs to the pyruvate, phosphate/water dikinase regulatory protein family. PSRP subfamily.

It catalyses the reaction [pyruvate, water dikinase] + ADP = [pyruvate, water dikinase]-phosphate + AMP + H(+). It carries out the reaction [pyruvate, water dikinase]-phosphate + phosphate + H(+) = [pyruvate, water dikinase] + diphosphate. Bifunctional serine/threonine kinase and phosphorylase involved in the regulation of the phosphoenolpyruvate synthase (PEPS) by catalyzing its phosphorylation/dephosphorylation. The sequence is that of Putative phosphoenolpyruvate synthase regulatory protein from Legionella pneumophila (strain Corby).